Here is a 150-residue protein sequence, read N- to C-terminus: Small ribosomal subunit protein eS19 (150 aa).

The protein belongs to the eukaryotic ribosomal protein eS19 family. In terms of assembly, part of the 30S ribosomal subunit.

May be involved in maturation of the 30S ribosomal subunit. This chain is Small ribosomal subunit protein eS19, found in Thermoplasma volcanium (strain ATCC 51530 / DSM 4299 / JCM 9571 / NBRC 15438 / GSS1).